A 21-amino-acid chain; its full sequence is Bombinin-H1/H3 (21 aa).

Ile-2 is modified (D-allo-isoleucine; in form H3). Ile-20 is subject to Isoleucine amide.

Belongs to the bombinin family. As to expression, expressed by the skin glands.

The protein resides in the secreted. In terms of biological role, has antimicrobial and hemolytic activities. The sequence is that of Bombinin-H1/H3 from Bombina variegata (Yellow-bellied toad).